Here is an 840-residue protein sequence, read N- to C-terminus: Serotype-specific mannosyltransferase WbdA (840 aa).

The interval 2-399 (HILIDVQGYQ…WANTAHLAIE (398 aa)) is alpha-(1-&gt;2)-mannosyltransferase. The alpha-(1-&gt;3)-mannosyltransferase stretch occupies residues 456–829 (KLLVDISVLA…WKQSAEFLLK (374 aa)).

Belongs to the glycosyltransferase group 1 family. Glycosyltransferase 4 subfamily. In terms of assembly, monomer. Interacts with the C-terminal region of WbdD. Interacts with WbdD via a surface-exposed alpha-helix in the C-terminal mannosyltransferase domain. However, the C-terminal domain is unable to interact with WbdD in the absence of its N-terminal partner.

The protein localises to the cell inner membrane. It carries out the reaction [alpha-D-Man-(1-&gt;3)-alpha-D-Man-(1-&gt;3)-alpha-D-Man-(1-&gt;2)-alpha-D-Man-(1-&gt;2)](n)-alpha-D-Man-(1-&gt;3)-alpha-D-Man-(1-&gt;3)-alpha-D-Man-(1-&gt;3)-alpha-D-GlcNAc-di-trans,octa-cis-undecaprenyl diphosphate + 2 GDP-alpha-D-mannose = alpha-D-Man-(1-&gt;2)-alpha-D-Man-(1-&gt;2)-[alpha-D-Man-(1-&gt;3)-alpha-D-Man-(1-&gt;3)-alpha-D-Man-(1-&gt;2)-alpha-D-Man-(1-&gt;2)](n)-alpha-D-Man-(1-&gt;3)-alpha-D-Man-(1-&gt;3)-alpha-D-Man-(1-&gt;3)-alpha-D-GlcNAc-di-trans,octa-cis-undecaprenyl diphosphate + 2 GDP + 2 H(+). The catalysed reaction is alpha-D-Man-(1-&gt;2)-alpha-D-Man-(1-&gt;2)-[alpha-D-Man-(1-&gt;3)-alpha-D-Man-(1-&gt;3)-alpha-D-Man-(1-&gt;2)-alpha-D-Man-(1-&gt;2)](n)-alpha-D-Man-(1-&gt;3)-alpha-D-Man-(1-&gt;3)-alpha-D-Man-(1-&gt;3)-alpha-D-GlcNAc-di-trans,octa-cis-undecaprenyl diphosphate + 2 GDP-alpha-D-mannose = [alpha-D-Man-(1-&gt;3)-alpha-D-Man-(1-&gt;3)-alpha-D-Man-(1-&gt;2)-alpha-D-Man-(1-&gt;2)](n+1)-alpha-D-Man-(1-&gt;3)-alpha-D-Man-(1-&gt;3)-alpha-D-Man-(1-&gt;3)-alpha-D-GlcNAc-di-trans,octa-cis-undecaprenyl diphosphate + 2 GDP + 2 H(+). It functions in the pathway bacterial outer membrane biogenesis; LPS O-antigen biosynthesis. With respect to regulation, the alpha-(1-&gt;2)-mannosyltransferase activity of the N-terminal domain is regulated by the activity of the C-terminal alpha-(1-&gt;3)-mannosyltransferase. The relative concentration of WbdA and WbdD is critical in determining the O polysaccharide (OPS) modal chain length. OPS chain length increases with increasing concentration of WbdA, but the maximum length does not increase beyond the wild-type modal length, despite substantial increases in WbdA concentration. Mannosyltransferase involved in the biosynthesis of the repeat unit of the lipopolysaccharide (LPS) O-antigen region. Catalyzes the polymerization of a tetrasaccharide repeat unit containing two alpha-(1-&gt;3)- and two alpha-(1-&gt;2)-linked mannopyranose residues. Extension is terminated by the action of the chain terminator bifunctional methyltransferase/kinase WbdD. In Escherichia coli, this protein is Serotype-specific mannosyltransferase WbdA.